The chain runs to 88 residues: Large ribosomal subunit protein bL27 (88 aa).

The disordered stretch occupies residues 1–25 (MAHKKAGGSSRNGRDSPGQRRGIKR).

The protein belongs to the bacterial ribosomal protein bL27 family.

The polypeptide is Large ribosomal subunit protein bL27 (rpmA) (Lawsonia intracellularis).